The chain runs to 363 residues: Fructose-bisphosphate aldolase (363 aa).

Positions 56 and 147 each coordinate substrate. Glu188 acts as the Proton acceptor in catalysis. The active-site Schiff-base intermediate with dihydroxyacetone-P is the Lys230.

It belongs to the class I fructose-bisphosphate aldolase family.

The enzyme catalyses beta-D-fructose 1,6-bisphosphate = D-glyceraldehyde 3-phosphate + dihydroxyacetone phosphate. Its pathway is carbohydrate degradation; glycolysis; D-glyceraldehyde 3-phosphate and glycerone phosphate from D-glucose: step 4/4. The protein is Fructose-bisphosphate aldolase (FBPA) of Echinococcus multilocularis (Fox tapeworm).